We begin with the raw amino-acid sequence, 314 residues long: Methionyl-tRNA formyltransferase (314 aa).

112–115 (SLLP) contacts (6S)-5,6,7,8-tetrahydrofolate.

The protein belongs to the Fmt family.

It carries out the reaction L-methionyl-tRNA(fMet) + (6R)-10-formyltetrahydrofolate = N-formyl-L-methionyl-tRNA(fMet) + (6S)-5,6,7,8-tetrahydrofolate + H(+). Its function is as follows. Attaches a formyl group to the free amino group of methionyl-tRNA(fMet). The formyl group appears to play a dual role in the initiator identity of N-formylmethionyl-tRNA by promoting its recognition by IF2 and preventing the misappropriation of this tRNA by the elongation apparatus. The chain is Methionyl-tRNA formyltransferase from Buchnera aphidicola subsp. Schizaphis graminum (strain Sg).